The following is a 985-amino-acid chain: Invasin (985 aa).

The segment at 494 to 594 is D1; the sequence is SVTVQQPQLT…RQSVDTHFVK (101 aa). At 494–985 the chain is on the extracellular side; the sequence is SVTVQQPQLT…LAFPLCALAI (492 aa). Big-1 domains are found at residues 503–594 and 601–691; these read TLTA…HFVK and KSTL…VNFT. The segment at 595 to 694 is D2; the sequence is GTIAADKSTL…SVTVNFTADP (100 aa). The D3 stretch occupies residues 695–794; the sequence is IPDAGRSSFT…LQKKISLFPV (100 aa). A D4 region spans residues 795–886; sequence PTLTGILVNG…YSVSYRFYPN (92 aa). The integrin-binding stretch occupies residues 795–985; that stretch reads PTLTGILVNG…LAFPLCALAI (191 aa). The tract at residues 887-985 is D5; the sequence is RWIYDGGTSL…LAFPLCALAI (99 aa). A disulfide bridge connects residues cysteine 906 and cysteine 981.

Belongs to the intimin/invasin family.

The protein resides in the cell surface. Functionally, invasin is a protein that allows enteric bacteria to penetrate cultured mammalian cells. The entry of invasin in the cell is mediated by binding several beta-1 chain integrins. In Yersinia pseudotuberculosis serotype I (strain IP32953), this protein is Invasin.